A 200-amino-acid polypeptide reads, in one-letter code: Adenylate kinase (200 aa).

10-15 (GAGKGT) is a binding site for ATP. Residues 30 to 59 (STGDMLRAAVAAGTPVGLEAKAVMESGGLV) are NMP. Residues Thr-31, Arg-36, 57–59 (GLV), 85–88 (GFPR), and Gln-92 contribute to the AMP site. Residues 126-142 (KRAAETLARGQAVRKDD) are LID. Position 127 (Arg-127) interacts with ATP. 2 residues coordinate AMP: Arg-139 and Arg-150. ATP is bound at residue Gln-178.

The protein belongs to the adenylate kinase family. Monomer.

Its subcellular location is the cytoplasm. The catalysed reaction is AMP + ATP = 2 ADP. It participates in purine metabolism; AMP biosynthesis via salvage pathway; AMP from ADP: step 1/1. Functionally, catalyzes the reversible transfer of the terminal phosphate group between ATP and AMP. Plays an important role in cellular energy homeostasis and in adenine nucleotide metabolism. The chain is Adenylate kinase from Methylobacterium radiotolerans (strain ATCC 27329 / DSM 1819 / JCM 2831 / NBRC 15690 / NCIMB 10815 / 0-1).